Consider the following 460-residue polypeptide: Phosphoglucomutase (460 aa).

Ser-103 (phosphoserine intermediate) is an active-site residue. Position 103 (Ser-103) interacts with Mg(2+). Residues 103–104 and Lys-113 contribute to the substrate site; that span reads SH. Residues Asp-239, Asp-241, and Asp-243 each coordinate Mg(2+). Substrate is bound by residues 243–244, Thr-303, and 322–324; these read DR and EMS.

Belongs to the phosphohexose mutase family. Requires Mg(2+) as cofactor.

The protein resides in the cytoplasm. It carries out the reaction alpha-D-glucose 1-phosphate = alpha-D-glucose 6-phosphate. This enzyme participates in both the breakdown and synthesis of glucose. The sequence is that of Phosphoglucomutase (pgm) from Neisseria meningitidis serogroup A / serotype 4A (strain DSM 15465 / Z2491).